The sequence spans 432 residues: MTVNDKKRLAIIGGGPGGLAAARVFSQSLPNFEIEIFVKDYDIGGVWHYPEQKSDGRVMYDHLETNISKKLMQFSGFPFEENVPLYPSRRNIWEYLKAYYKTFIANKDAISIHFSTEVTYLKKKNSQWEITSKDELRTTKSDFDFVIVASGHYSVPKLPTNIAGLDLWFDNKGAFHSKDFKNCEFAREKVVIVVGNGSSGQDIANQLTTVAKKVYNSIKEPASNQLKAKLIETVQTIDSADWKNRSVTLSDGRVLQNIDYIIFATGYYYSFPFIEPSVRLEVLGEGVTGDKHSSVNLHNLWEHMIYVKDPTLSFILTPQLVIPFPLSELQAAIMVEVFCKSLPITTTFDSNACGTHNFPKGKDLEYYAELQELLNSIPRRVGHFEPVVWDDRLIDLRNSSYTDKEERNVLLAEHAQALKKKKAPYFLPAPHT.

Residues 13-17 (GGGPG) and 46-47 (VW) each bind FAD. Residue 65–66 (TN) coordinates NADP(+). 117 to 118 (EV) provides a ligand contact to FAD. 199-202 (SGQD) lines the NADP(+) pocket.

The protein belongs to the FMO family. As to quaternary structure, monomer. Requires FAD as cofactor.

In terms of biological role, flavin-dependent oxidation of thiol-containing compounds. Probably required for the correct folding of disulfide-bonded proteins. This is Thiol-specific monooxygenase (FMO1) from Saccharomyces cerevisiae (strain ATCC 204508 / S288c) (Baker's yeast).